Consider the following 165-residue polypeptide: Large ribosomal subunit protein uL10 (165 aa).

This sequence belongs to the universal ribosomal protein uL10 family. As to quaternary structure, part of the ribosomal stalk of the 50S ribosomal subunit. The N-terminus interacts with L11 and the large rRNA to form the base of the stalk. The C-terminus forms an elongated spine to which L12 dimers bind in a sequential fashion forming a multimeric L10(L12)X complex.

Its function is as follows. Forms part of the ribosomal stalk, playing a central role in the interaction of the ribosome with GTP-bound translation factors. The polypeptide is Large ribosomal subunit protein uL10 (Mycoplasma capricolum subsp. capricolum (strain California kid / ATCC 27343 / NCTC 10154)).